Consider the following 555-residue polypeptide: Formate--tetrahydrofolate ligase (555 aa).

Residue 65 to 72 participates in ATP binding; the sequence is TPAGEGKS.

It belongs to the formate--tetrahydrofolate ligase family.

The catalysed reaction is (6S)-5,6,7,8-tetrahydrofolate + formate + ATP = (6R)-10-formyltetrahydrofolate + ADP + phosphate. It functions in the pathway one-carbon metabolism; tetrahydrofolate interconversion. This chain is Formate--tetrahydrofolate ligase, found in Staphylococcus haemolyticus (strain JCSC1435).